Consider the following 87-residue polypeptide: Small ribosomal subunit protein bS20 (87 aa).

A disordered region spans residues 1–22; the sequence is MANSAGSKKRARQAVKSRAHNG. Positions 7–19 are enriched in basic residues; it reads SKKRARQAVKSRA.

Belongs to the bacterial ribosomal protein bS20 family.

Its function is as follows. Binds directly to 16S ribosomal RNA. The polypeptide is Small ribosomal subunit protein bS20 (Marinomonas sp. (strain MWYL1)).